A 64-amino-acid polypeptide reads, in one-letter code: Small ribosomal subunit protein eS17 (64 aa).

Belongs to the eukaryotic ribosomal protein eS17 family.

This is Small ribosomal subunit protein eS17 from Methanosarcina barkeri (strain Fusaro / DSM 804).